Reading from the N-terminus, the 144-residue chain is SsrA-binding protein (144 aa).

It belongs to the SmpB family.

The protein localises to the cytoplasm. Required for rescue of stalled ribosomes mediated by trans-translation. Binds to transfer-messenger RNA (tmRNA), required for stable association of tmRNA with ribosomes. tmRNA and SmpB together mimic tRNA shape, replacing the anticodon stem-loop with SmpB. tmRNA is encoded by the ssrA gene; the 2 termini fold to resemble tRNA(Ala) and it encodes a 'tag peptide', a short internal open reading frame. During trans-translation Ala-aminoacylated tmRNA acts like a tRNA, entering the A-site of stalled ribosomes, displacing the stalled mRNA. The ribosome then switches to translate the ORF on the tmRNA; the nascent peptide is terminated with the 'tag peptide' encoded by the tmRNA and targeted for degradation. The ribosome is freed to recommence translation, which seems to be the essential function of trans-translation. This is SsrA-binding protein from Thermus thermophilus (strain ATCC BAA-163 / DSM 7039 / HB27).